The following is a 131-amino-acid chain: MAAARAAVPIAVFLLLVLAEADPAAATRSPSAFVQNAIYSNRITIFSKTYCPYSMRAKRIFRDLKENPYIVELDLREDGREIQSVLLDLVGRHTVPQVFVNGQHVGGSDDTANAHSNGQLQKLLGNSQSQR.

The Glutaredoxin domain occupies 31-131 (SAFVQNAIYS…KLLGNSQSQR (101 aa)). Cys-51 contacts [2Fe-2S] cluster.

The protein belongs to the glutaredoxin family. CPYC subfamily.

It localises to the cytoplasm. Functionally, may only reduce GSH-thiol disulfides, but not protein disulfides. The sequence is that of Monothiol glutaredoxin-S6 (GRXS6) from Oryza sativa subsp. japonica (Rice).